Reading from the N-terminus, the 125-residue chain is uncharacterized protein (125 aa).

The HTH dtxR-type domain occupies 1 to 63 (MSQSIEDYLE…YEPYIGITLT (63 aa)).

Belongs to the DtxR/MntR family.

This is an uncharacterized protein from Methanocaldococcus jannaschii (strain ATCC 43067 / DSM 2661 / JAL-1 / JCM 10045 / NBRC 100440) (Methanococcus jannaschii).